Consider the following 206-residue polypeptide: MVKIPCIYENGQIEDIEASESVFGRVYNEALVHQVVKSYLANARAGTRAQKGRSDVTGSTRKQWRQKGTGRARTGAATNPLWRGGGKIFPNKPTENFKQKLNRKMYRAGMCTIFSELLRNNKLVAIDEFQIEMPKTKVCLQKLKNYQLENVMIITSEIDSNLYLASRNLPNLKVVEVDLIDPVSLLAYDNVVITRDTVNKIENVLQ.

The interval 47-77 is disordered; the sequence is TRAQKGRSDVTGSTRKQWRQKGTGRARTGAA.

It belongs to the universal ribosomal protein uL4 family. In terms of assembly, part of the 50S ribosomal subunit.

Its function is as follows. One of the primary rRNA binding proteins, this protein initially binds near the 5'-end of the 23S rRNA. It is important during the early stages of 50S assembly. It makes multiple contacts with different domains of the 23S rRNA in the assembled 50S subunit and ribosome. Functionally, forms part of the polypeptide exit tunnel. This is Large ribosomal subunit protein uL4 from Nitrosomonas europaea (strain ATCC 19718 / CIP 103999 / KCTC 2705 / NBRC 14298).